Here is an 843-residue protein sequence, read N- to C-terminus: INO80 complex subunit D-B (843 aa).

Over residues 159-175 the composition is skewed to basic and acidic residues; the sequence is TLNHKQKQQDHSVDTNH. Disordered stretches follow at residues 159 to 216, 221 to 240, 503 to 550, 695 to 726, and 791 to 843; these read TLNH…PTVR, FKTSSSLQDTHQGSKDSTDN, YHHH…LPQG, SLLHPSEDAFPPSPPSPQPPLTPPSSVGHLTD, and LSTP…TAAP. Polar residues-rich tracts occupy residues 176–187, 197–216, and 221–231; these read LRTSSLPSTLSH, RATQTPINPSSPRAATPTVR, and FKTSSSLQDTH. Over residues 503-540 the composition is skewed to basic residues; that stretch reads YHHHQQIQRHRPLKKAKPPALSKKHKKKGKRGTQRRPQ. Residues 705–717 show a composition bias toward pro residues; that stretch reads PPSPPSPQPPLTP. A compositionally biased stretch (low complexity) spans 796-821; it reads QPSSALSALPQSSQTRSTTTSPTSQT.

Belongs to the INO80D family. In terms of assembly, component of the chromatin-remodeling INO80 complex.

It is found in the nucleus. Putative regulatory component of the chromatin remodeling INO80 complex which is involved in transcriptional regulation, DNA replication and probably DNA repair. This is INO80 complex subunit D-B (ino80db) from Danio rerio (Zebrafish).